A 470-amino-acid polypeptide reads, in one-letter code: mRNA export factor ICP27 homolog (470 aa).

Disordered stretches follow at residues 1–31 and 62–204; these read MALSSVSSCEPMEDEMSIMGSDTEDNFTGGD and VGDP…DRLN. A compositionally biased stretch (polar residues) spans 71-85; sequence VSFSASPQRAQPSNP. Basic residues-rich tracts occupy residues 94–107 and 178–187; these read HGRRNRRRPFRRNN and RVHRNRRRGN. Cysteine 359, histidine 437, cysteine 441, and cysteine 446 together coordinate Zn(2+). The segment at 359-446 adopts a CHC2-type zinc-finger fold; it reads CYLSSSGSPT…HKRRCKADTC (88 aa).

This sequence belongs to the HHV-1 ICP27 protein family. Homodimer. Homodimerization is required for transactivation. Associates in a complex with RNA, and host export factors NXF1/TAP and ALYREF; these interactions allow nuclear export of viral transcripts. Interacts with three host shuttling SR proteins SRSF1, SRSF3 and SRSF7. Interacts with host SRPK1. Interacts with IE62; this interaction enhances IE62 transactivation.

It is found in the host cytoplasm. The protein localises to the host nucleus. Functionally, multifunctional regulator of the expression of viral genes that mediates nuclear export of viral intronless mRNAs. This immediate early (EI) protein promotes the nuclear export of viral intronless mRNAs by interacting with mRNAs and host NXF1/TAP. The protein is mRNA export factor ICP27 homolog of Equine herpesvirus 1 (strain Ab4p) (EHV-1).